Consider the following 303-residue polypeptide: DnaJ homolog subfamily C member 17 (303 aa).

The 66-residue stretch at 11–76 folds into the J domain; that stretch reads DLYALLGIEE…AARAAYDKVR (66 aa). 2 stretches are compositionally biased toward basic and acidic residues: residues 78–106 and 150–166; these read ARKQ…RERQ and IRQD…ENTE. Disordered regions lie at residues 78–124 and 150–170; these read ARKQ…TTTL and IRQD…GKGT. The 72-residue stretch at 178–249 folds into the RRM domain; the sequence is KCKKEDESQG…NPLKVSWLEG (72 aa). N6-methyllysine is present on Lys264.

Its subcellular location is the cytoplasm. The protein resides in the nucleus. In terms of biological role, may negatively affect PAX8-induced thyroglobulin/TG transcription. The protein is DnaJ homolog subfamily C member 17 (Dnajc17) of Rattus norvegicus (Rat).